Consider the following 220-residue polypeptide: Small ribosomal subunit protein eS1 (220 aa).

The protein belongs to the eukaryotic ribosomal protein eS1 family.

The polypeptide is Small ribosomal subunit protein eS1 (Methanococcus vannielii (strain ATCC 35089 / DSM 1224 / JCM 13029 / OCM 148 / SB)).